Consider the following 258-residue polypeptide: Acetylglutamate kinase (258 aa).

Residues 44-45 (GG), Arg66, and Asn158 contribute to the substrate site. Residues 181-186 (DVSGIL) and 209-211 (IIT) contribute to the ATP site.

The protein belongs to the acetylglutamate kinase family. ArgB subfamily. In terms of assembly, homodimer.

Its subcellular location is the cytoplasm. The catalysed reaction is N-acetyl-L-glutamate + ATP = N-acetyl-L-glutamyl 5-phosphate + ADP. Its pathway is amino-acid biosynthesis; L-arginine biosynthesis; N(2)-acetyl-L-ornithine from L-glutamate: step 2/4. In terms of biological role, catalyzes the ATP-dependent phosphorylation of N-acetyl-L-glutamate. This is Acetylglutamate kinase from Shigella dysenteriae serotype 1 (strain Sd197).